Consider the following 361-residue polypeptide: Cytochrome c peroxidase, mitochondrial (361 aa).

The N-terminal 41 residues, M1–Y41, are a transit peptide targeting the mitochondrion. Residue H122 is the Proton acceptor of the active site. H245 lines the heme b pocket. W261 functions as the Tryptophan radical intermediate in the catalytic mechanism.

This sequence belongs to the peroxidase family. Cytochrome c peroxidase subfamily. Forms a one-to-one complex with cytochrome c. The cofactor is heme b.

The protein resides in the mitochondrion matrix. It is found in the mitochondrion intermembrane space. The catalysed reaction is 2 Fe(II)-[cytochrome c] + H2O2 + 2 H(+) = 2 Fe(III)-[cytochrome c] + 2 H2O. Functionally, destroys radicals which are normally produced within the cells and which are toxic to biological systems. This Emericella nidulans (strain FGSC A4 / ATCC 38163 / CBS 112.46 / NRRL 194 / M139) (Aspergillus nidulans) protein is Cytochrome c peroxidase, mitochondrial (ccp1).